The following is a 297-amino-acid chain: Tyrosine recombinase XerC (297 aa).

One can recognise a Core-binding (CB) domain in the interval 1–83 (MAILDEFDEH…AVKAFTAWAK (83 aa)). Positions 104–291 (TLPAVLRQDQ…AVSRLRVVHD (188 aa)) constitute a Tyr recombinase domain. Residues Arg148, Lys172, His243, Arg246, and His269 contribute to the active site. The O-(3'-phospho-DNA)-tyrosine intermediate role is filled by Tyr278.

Belongs to the 'phage' integrase family. XerC subfamily. Forms a cyclic heterotetrameric complex composed of two molecules of XerC and two molecules of XerD.

It is found in the cytoplasm. Its function is as follows. Site-specific tyrosine recombinase, which acts by catalyzing the cutting and rejoining of the recombining DNA molecules. The XerC-XerD complex is essential to convert dimers of the bacterial chromosome into monomers to permit their segregation at cell division. It also contributes to the segregational stability of plasmids. The chain is Tyrosine recombinase XerC from Mycobacterium leprae (strain TN).